The chain runs to 400 residues: Endoglucanase 5A (400 aa).

The N-terminal stretch at 1 to 26 (MKKITTIFVVLLMTVALFSIGNTTAA) is a signal peptide. Substrate contacts are provided by residues His61, 65 to 66 (WY), Tyr92, and His127. The active-site Proton donor is Glu165. A substrate-binding site is contributed by Tyr228. Catalysis depends on Glu254, which acts as the Nucleophile. Residues 260–261 (AT), Trp288, and 293–295 (KDE) each bind substrate. A disordered region spans residues 328–363 (ESASIPPSDPTPPSDPGEPDPTPPSDPGEYPAWDPN). The segment covering 334–353 (PSDPTPPSDPGEPDPTPPSD) has biased composition (pro residues). The Chitin-binding type-3 domain occupies 357 to 396 (YPAWDPNQIYTNEIVYHNGQLWQAKWWTQNQEPGDPYGPW).

This sequence belongs to the glycosyl hydrolase 5 (cellulase A) family. Monomer.

The protein resides in the secreted. It carries out the reaction Endohydrolysis of (1-&gt;4)-beta-D-glucosidic linkages in cellulose, lichenin and cereal beta-D-glucans.. This chain is Endoglucanase 5A (cel5A), found in Salipaludibacillus agaradhaerens (Bacillus agaradhaerens).